A 386-amino-acid polypeptide reads, in one-letter code: EARP and GARP complex-interacting protein 1 (386 aa).

M1 carries the N-acetylmethionine modification. WD repeat units follow at residues 132-172, 182-222, 226-266, and 270-310; these read GAQG…SQAV, RGQL…QIYC, AHGQ…EPVK, and EHSH…SEPF. Residues 312–332 are disordered; sequence HLVDDDDVSDPEEHHTEKSKE. Position 320 is a phosphoserine (S320). Positions 322–332 are enriched in basic and acidic residues; it reads PEEHHTEKSKE. The WD 5 repeat unit spans residues 344-384; the sequence is EHEDSVYAVDWASADPWLFASLSYDGRLVINRVPRALKYHI.

This sequence belongs to the WD repeat EIPR1 family. In terms of assembly, interacts with two multisubunit tethering complexes: EARP composed of VPS50, VPS51, VPS52 and VPS53 subunits and GARP complex composed of VPS51, VPS52, VPS53 and VPS54 subunits. Interacts with SNAP29. As to expression, ubiquitous. Highly expressed in brain, adipose tissue, spleen and kidney (at protein level).

The protein localises to the golgi apparatus. Its subcellular location is the trans-Golgi network. In terms of biological role, acts as a component of endosomal retrieval machinery that is involved in protein transport from early endosomes to either recycling endosomes or the trans-Golgi network. Mediates the recruitment of Golgi-associated retrograde protein (GARP) complex to the trans-Golgi network and controls early endosome-to-Golgi transport of internalized protein. Promotes the recycling of internalized transferrin receptor (TFRC) to the plasma membrane through interaction with endosome-associated recycling protein (EARP) complex. Controls proper insulin distribution and secretion, and retention of cargo in mature dense core vesicles. Required for the stability of the endosome-associated retrograde protein (EARP) complex subunits and for proper localization and association of EARP with membranes. The protein is EARP and GARP complex-interacting protein 1 of Rattus norvegicus (Rat).